A 171-amino-acid polypeptide reads, in one-letter code: Adenine phosphoribosyltransferase (171 aa).

The protein belongs to the purine/pyrimidine phosphoribosyltransferase family. Homodimer.

The protein localises to the cytoplasm. The enzyme catalyses AMP + diphosphate = 5-phospho-alpha-D-ribose 1-diphosphate + adenine. Its pathway is purine metabolism; AMP biosynthesis via salvage pathway; AMP from adenine: step 1/1. Functionally, catalyzes a salvage reaction resulting in the formation of AMP, that is energically less costly than de novo synthesis. This Methylococcus capsulatus (strain ATCC 33009 / NCIMB 11132 / Bath) protein is Adenine phosphoribosyltransferase.